The chain runs to 557 residues: Dihydroxy-acid dehydratase (557 aa).

Residue Asp78 participates in Mg(2+) binding. Cys119 is a [2Fe-2S] cluster binding site. Positions 120 and 121 each coordinate Mg(2+). Residue Lys121 is modified to N6-carboxylysine. Cys192 is a binding site for [2Fe-2S] cluster. A Mg(2+)-binding site is contributed by Glu442. Residue Ser468 is the Proton acceptor of the active site.

Belongs to the IlvD/Edd family. As to quaternary structure, homodimer. Requires [2Fe-2S] cluster as cofactor. Mg(2+) is required as a cofactor.

It catalyses the reaction (2R)-2,3-dihydroxy-3-methylbutanoate = 3-methyl-2-oxobutanoate + H2O. The catalysed reaction is (2R,3R)-2,3-dihydroxy-3-methylpentanoate = (S)-3-methyl-2-oxopentanoate + H2O. The protein operates within amino-acid biosynthesis; L-isoleucine biosynthesis; L-isoleucine from 2-oxobutanoate: step 3/4. It functions in the pathway amino-acid biosynthesis; L-valine biosynthesis; L-valine from pyruvate: step 3/4. In terms of biological role, functions in the biosynthesis of branched-chain amino acids. Catalyzes the dehydration of (2R,3R)-2,3-dihydroxy-3-methylpentanoate (2,3-dihydroxy-3-methylvalerate) into 2-oxo-3-methylpentanoate (2-oxo-3-methylvalerate) and of (2R)-2,3-dihydroxy-3-methylbutanoate (2,3-dihydroxyisovalerate) into 2-oxo-3-methylbutanoate (2-oxoisovalerate), the penultimate precursor to L-isoleucine and L-valine, respectively. In Bacillus cereus (strain 03BB102), this protein is Dihydroxy-acid dehydratase.